A 150-amino-acid polypeptide reads, in one-letter code: Large ribosomal subunit protein eL19 (150 aa).

The disordered stretch occupies residues 56 to 90 (RGISSGRLKERKHKRRSKGEGRKHGSRKGKSGART).

Belongs to the eukaryotic ribosomal protein eL19 family. As to quaternary structure, part of the 50S ribosomal subunit.

Binds to the 23S rRNA. The protein is Large ribosomal subunit protein eL19 of Sulfolobus acidocaldarius (strain ATCC 33909 / DSM 639 / JCM 8929 / NBRC 15157 / NCIMB 11770).